Here is a 389-residue protein sequence, read N- to C-terminus: NAD-dependent protein deacetylase sirtuin-2 (389 aa).

A disordered region spans residues 1–34 (MAEPDPSHPLETQAGKVQEAQDSDSDSEGGAAGG). An N-acetylalanine modification is found at alanine 2. Phosphoserine is present on residues serine 23, serine 25, serine 27, and serine 53. A Deacetylase sirtuin-type domain is found at 57-338 (RLLDELTLEG…LALAELLGWK (282 aa)). NAD(+) contacts are provided by residues 85 to 89 (AGIST) and 95 to 97 (DFR). Serine 100 is subject to Phosphoserine. Residue 167–170 (QNID) participates in NAD(+) binding. Histidine 187 (proton acceptor) is an active-site residue. Residues cysteine 195 and cysteine 200 each coordinate Zn(2+). Serine 207 bears the Phosphoserine mark. Residues cysteine 221 and cysteine 224 each coordinate Zn(2+). NAD(+) contacts are provided by residues 262 to 263 (TS), 286 to 288 (NKE), and cysteine 324. Residues 350–389 (ASIDAQSGAEAPNPSTSASPRKSPPPAQDEARTTEREKPQ) form a disordered region. A phosphoserine mark is found at serine 368 and serine 372. A compositionally biased stretch (basic and acidic residues) spans 378-389 (DEARTTEREKPQ).

This sequence belongs to the sirtuin family. Class I subfamily. Interacts with CDC20, FOXO3 and FZR1. Associates with microtubules in primary cortical mature neurons. Homotrimer. Interacts (via both phosphorylated, unphosphorylated, active or inactive forms) with HDAC6; the interaction is necessary for the complex to interact with alpha-tubulin, suggesting that these proteins belong to a large complex that deacetylates the cytoskeleton. Interacts with FOXO1; the interaction is disrupted upon serum-starvation or oxidative stress, leading to increased level of acetylated FOXO1 and induction of autophagy. Interacts with RELA; the interaction occurs in the cytoplasm and is increased in a TNF-alpha-dependent manner. Interacts with HOXA10; the interaction is direct. Interacts with YWHAB and YWHAG; the interactions occur in a AKT-dependent manner and increase SIRT2-dependent TP53 deacetylation. Interacts with MAPK1/ERK2 and MAPK3/ERK1; the interactions increase SIRT2 stability and deacetylation activity. Interacts (phosphorylated form) with KMT5A isoform 2; the interaction is direct, stimulates KMT5A-mediated methyltransferase activity on histone at 'Lys-20' (H4K20me1) and is increased in a H(2)O(2)-induced oxidative stress-dependent manner. Interacts with G6PD; the interaction is enhanced by H(2)O(2) treatment. Interacts with a G1/S-specific cyclin E-CDK2 complex. Interacts with AURKA, CDK5R1 (p35 form) and CDK5 and HIF1A. Interacts with the tRNA ligase SARS1; recruited to the VEGFA promoter via interaction with SARS1. Interacts with BEX4; negatively regulates alpha-tubulin deacetylation by SIRT2. The cofactor is Zn(2+). In terms of processing, phosphorylated at phosphoserine and phosphothreonine. Phosphorylated at Ser-368 by a mitotic kinase CDK1/cyclin B at the G2/M transition; phosphorylation regulates the delay in cell-cycle progression. Phosphorylated at Ser-368 by a mitotic kinase G1/S-specific cyclin E/Cdk2 complex; phosphorylation inactivates SIRT2-mediated alpha-tubulin deacetylation and thereby negatively regulates cell adhesion, cell migration and neurite outgrowth during neuronal differentiation. Phosphorylated by cyclin A/Cdk2 and p35-Cdk5 complexes and to a lesser extent by the cyclin D3/Cdk4 and cyclin B/Cdk1, in vitro. Dephosphorylated at Ser-368 by CDC14A and CDC14B around early anaphase. Post-translationally, acetylated by EP300; acetylation leads both to the decreased of SIRT2-mediated alpha-tubulin deacetylase activity and SIRT2-mediated down-regulation of TP53 transcriptional activity. Ubiquitinated.

The protein resides in the nucleus. Its subcellular location is the cytoplasm. The protein localises to the perinuclear region. It localises to the cytoskeleton. It is found in the microtubule organizing center. The protein resides in the centrosome. Its subcellular location is the centriole. The protein localises to the spindle. It localises to the midbody. It is found in the chromosome. The protein resides in the perikaryon. Its subcellular location is the cell projection. The protein localises to the growth cone. It localises to the myelin membrane. The catalysed reaction is N(6)-acetyl-L-lysyl-[protein] + NAD(+) + H2O = 2''-O-acetyl-ADP-D-ribose + nicotinamide + L-lysyl-[protein]. It catalyses the reaction N(6)-tetradecanoyl-L-lysyl-[protein] + NAD(+) + H2O = 2''-O-tetradecanoyl-ADP-D-ribose + nicotinamide + L-lysyl-[protein]. It carries out the reaction N(6)-hexadecanoyl-L-lysyl-[protein] + NAD(+) + H2O = 2''-O-hexadecanoyl-ADP-D-ribose + nicotinamide + L-lysyl-[protein]. Its activity is regulated as follows. Inhibited by Sirtinol, A3 and M15 small molecules. Inhibited by nicotinamide. Functionally, NAD-dependent protein deacetylase, which deacetylates internal lysines on histone and alpha-tubulin as well as many other proteins such as key transcription factors. Participates in the modulation of multiple and diverse biological processes such as cell cycle control, genomic integrity, microtubule dynamics, cell differentiation, metabolic networks, and autophagy. Plays a major role in the control of cell cycle progression and genomic stability. Functions in the antephase checkpoint preventing precocious mitotic entry in response to microtubule stress agents, and hence allowing proper inheritance of chromosomes. Positively regulates the anaphase promoting complex/cyclosome (APC/C) ubiquitin ligase complex activity by deacetylating CDC20 and FZR1, then allowing progression through mitosis. Associates both with chromatin at transcriptional start sites (TSSs) and enhancers of active genes. Plays a role in cell cycle and chromatin compaction through epigenetic modulation of the regulation of histone H4 'Lys-20' methylation (H4K20me1) during early mitosis. Specifically deacetylates histone H4 at 'Lys-16' (H4K16ac) between the G2/M transition and metaphase enabling H4K20me1 deposition by KMT5A leading to ulterior levels of H4K20me2 and H4K20me3 deposition throughout cell cycle, and mitotic S-phase progression. Deacetylates KMT5A modulating KMT5A chromatin localization during the mitotic stress response. Also deacetylates histone H3 at 'Lys-57' (H3K56ac) during the mitotic G2/M transition. During oocyte meiosis progression, may deacetylate histone H4 at 'Lys-16' (H4K16ac) and alpha-tubulin, regulating spindle assembly and chromosome alignment by influencing microtubule dynamics and kinetochore function. Deacetylates histone H4 at 'Lys-16' (H4K16ac) at the VEGFA promoter and thereby contributes to regulate expression of VEGFA, a key regulator of angiogenesis. Deacetylates alpha-tubulin at 'Lys-40' and hence controls neuronal motility, oligodendroglial cell arbor projection processes and proliferation of non-neuronal cells. Phosphorylation at Ser-368 by a G1/S-specific cyclin E-CDK2 complex inactivates SIRT2-mediated alpha-tubulin deacetylation, negatively regulating cell adhesion, cell migration and neurite outgrowth during neuronal differentiation. Deacetylates PARD3 and participates in the regulation of Schwann cell peripheral myelination formation during early postnatal development and during postinjury remyelination. Involved in several cellular metabolic pathways. Plays a role in the regulation of blood glucose homeostasis by deacetylating and stabilizing phosphoenolpyruvate carboxykinase PCK1 activity in response to low nutrient availability. Acts as a key regulator in the pentose phosphate pathway (PPP) by deacetylating and activating the glucose-6-phosphate G6PD enzyme, and therefore, stimulates the production of cytosolic NADPH to counteract oxidative damage. Maintains energy homeostasis in response to nutrient deprivation as well as energy expenditure by inhibiting adipogenesis and promoting lipolysis. Attenuates adipocyte differentiation by deacetylating and promoting FOXO1 interaction to PPARG and subsequent repression of PPARG-dependent transcriptional activity. Plays a role in the regulation of lysosome-mediated degradation of protein aggregates by autophagy in neuronal cells. Deacetylates FOXO1 in response to oxidative stress or serum deprivation, thereby negatively regulating FOXO1-mediated autophagy. Deacetylates a broad range of transcription factors and co-regulators regulating target gene expression. Deacetylates transcriptional factor FOXO3 stimulating the ubiquitin ligase SCF(SKP2)-mediated FOXO3 ubiquitination and degradation. Deacetylates HIF1A and therefore promotes HIF1A degradation and inhibition of HIF1A transcriptional activity in tumor cells in response to hypoxia. Deacetylates RELA in the cytoplasm inhibiting NF-kappaB-dependent transcription activation upon TNF-alpha stimulation. Inhibits transcriptional activation by deacetylating p53/TP53 and EP300. Also deacetylates EIF5A. Functions as a negative regulator on oxidative stress-tolerance in response to anoxia-reoxygenation conditions. Plays a role as tumor suppressor. In addition to protein deacetylase activity, also has activity toward long-chain fatty acyl groups and mediates protein-lysine demyristoylation and depalmitoylation of target proteins, such as ARF6 and KRAS, thereby regulating their association with membranes. This is NAD-dependent protein deacetylase sirtuin-2 (SIRT2) from Macaca fascicularis (Crab-eating macaque).